The primary structure comprises 393 residues: Major outer membrane protein P.IA (393 aa).

The signal sequence occupies residues 1-19 (MRKKLTALVLSALPLAAVA).

The protein belongs to the Gram-negative porin family. As to quaternary structure, homotrimer.

It localises to the cell outer membrane. Serves as a slightly cation selective porin. Major antigen on the gonococcal cell surface and it may have pathogenic properties in addition to its porin activity. This is Major outer membrane protein P.IA (porA) from Neisseria meningitidis serogroup C.